Reading from the N-terminus, the 174-residue chain is Probable carboxylesterase Culp5 (174 aa).

Residue Ser67 is the Nucleophile of the active site. A disulfide bridge connects residues Cys137 and Cys144. Residue Asp141 is part of the active site. His153 acts as the Proton donor/acceptor in catalysis.

It belongs to the cutinase family.

Its function is as follows. Does not exhibit cutinase activity. The protein is Probable carboxylesterase Culp5 of Mycobacterium tuberculosis (strain ATCC 25618 / H37Rv).